We begin with the raw amino-acid sequence, 417 residues long: MLKREMNIADYDTELWQAMQQEVTRQEQHIELIASENYTSPRVMQAQGSQLTNKYAEGYPGKRYYGGCQYVDQVEQLAIDRAKALFGADYANVQPHSGSQANFAVYTALLQPGDTVLGMNLAHGGHLTHGSPVNFSGKLYNVVPYGIDAHGRIDYDDLAAQAQRHRPKMIIGGFSAYSGVVDWARMREIANSIGAYLFVDMAHVAGLVAAGVYPNPIPHAHVVTTTTHKTLAGPRGGLILAKGLDETMYKKLNSAVFPGAQGGPLMHVIAAKAVALKEAMEPEFTRYQQQVAKNAKAMVDVFLQRGYKVVSGGTENHLFLLDLVDRQITGKEADAALGHANITVNKNSVPNDPQSPFVTSGIRIGTPAITRRGFKEAESRELAGWMCDVLDNIHDEATIACTKQKVLALCERLPVYA.

(6S)-5,6,7,8-tetrahydrofolate is bound by residues Leu-121 and 125 to 127 (GHL). N6-(pyridoxal phosphate)lysine is present on Lys-229. 355 to 357 (SPF) contacts (6S)-5,6,7,8-tetrahydrofolate.

This sequence belongs to the SHMT family. In terms of assembly, homodimer. It depends on pyridoxal 5'-phosphate as a cofactor.

It is found in the cytoplasm. It carries out the reaction (6R)-5,10-methylene-5,6,7,8-tetrahydrofolate + glycine + H2O = (6S)-5,6,7,8-tetrahydrofolate + L-serine. It participates in one-carbon metabolism; tetrahydrofolate interconversion. The protein operates within amino-acid biosynthesis; glycine biosynthesis; glycine from L-serine: step 1/1. Its function is as follows. Catalyzes the reversible interconversion of serine and glycine with tetrahydrofolate (THF) serving as the one-carbon carrier. This reaction serves as the major source of one-carbon groups required for the biosynthesis of purines, thymidylate, methionine, and other important biomolecules. Also exhibits THF-independent aldolase activity toward beta-hydroxyamino acids, producing glycine and aldehydes, via a retro-aldol mechanism. The polypeptide is Serine hydroxymethyltransferase (Edwardsiella ictaluri (strain 93-146)).